The sequence spans 182 residues: MSDSSKERKKKFTGMVNKQKSEDQQNNSKQADDLDELKTLKERAVQLEDHLRRAVADNENVKRIMQKQISDANDYAVTKFARDMIDSCDNLKRVMEILKDDDPVHEGIKVAYKKIMNDLKKHGIEEIDPIGELFDSNLHQAVVEREDNEKKTGTIVEVLQTGYTIKNRLLRPAMVIISKKNC.

The tract at residues 1 to 37 (MSDSSKERKKKFTGMVNKQKSEDQQNNSKQADDLDEL) is disordered.

The protein belongs to the GrpE family. As to quaternary structure, homodimer.

The protein localises to the cytoplasm. In terms of biological role, participates actively in the response to hyperosmotic and heat shock by preventing the aggregation of stress-denatured proteins, in association with DnaK and GrpE. It is the nucleotide exchange factor for DnaK and may function as a thermosensor. Unfolded proteins bind initially to DnaJ; upon interaction with the DnaJ-bound protein, DnaK hydrolyzes its bound ATP, resulting in the formation of a stable complex. GrpE releases ADP from DnaK; ATP binding to DnaK triggers the release of the substrate protein, thus completing the reaction cycle. Several rounds of ATP-dependent interactions between DnaJ, DnaK and GrpE are required for fully efficient folding. This Wolbachia sp. subsp. Brugia malayi (strain TRS) protein is Protein GrpE.